Here is a 192-residue protein sequence, read N- to C-terminus: Pyridoxal 5'-phosphate synthase subunit PdxT (192 aa).

53–55 (GES) lines the L-glutamine pocket. Cysteine 85 serves as the catalytic Nucleophile. Residues arginine 112 and 140–141 (IR) each bind L-glutamine. Residues histidine 176 and glutamate 178 each act as charge relay system in the active site.

The protein belongs to the glutaminase PdxT/SNO family. As to quaternary structure, in the presence of PdxS, forms a dodecamer of heterodimers. Only shows activity in the heterodimer.

The enzyme catalyses aldehydo-D-ribose 5-phosphate + D-glyceraldehyde 3-phosphate + L-glutamine = pyridoxal 5'-phosphate + L-glutamate + phosphate + 3 H2O + H(+). The catalysed reaction is L-glutamine + H2O = L-glutamate + NH4(+). It functions in the pathway cofactor biosynthesis; pyridoxal 5'-phosphate biosynthesis. Catalyzes the hydrolysis of glutamine to glutamate and ammonia as part of the biosynthesis of pyridoxal 5'-phosphate. The resulting ammonia molecule is channeled to the active site of PdxS. This is Pyridoxal 5'-phosphate synthase subunit PdxT from Natronomonas pharaonis (strain ATCC 35678 / DSM 2160 / CIP 103997 / JCM 8858 / NBRC 14720 / NCIMB 2260 / Gabara) (Halobacterium pharaonis).